Reading from the N-terminus, the 188-residue chain is Elongation factor P (188 aa).

This sequence belongs to the elongation factor P family.

Its subcellular location is the cytoplasm. Its pathway is protein biosynthesis; polypeptide chain elongation. Functionally, involved in peptide bond synthesis. Stimulates efficient translation and peptide-bond synthesis on native or reconstituted 70S ribosomes in vitro. Probably functions indirectly by altering the affinity of the ribosome for aminoacyl-tRNA, thus increasing their reactivity as acceptors for peptidyl transferase. The polypeptide is Elongation factor P (Rickettsia canadensis (strain McKiel)).